The following is a 348-amino-acid chain: MHKVKLAAITCELPARSYENDDPVFAAVPDLSESWWQFWGVNRRGYFDPRNGENEFSLVVRAAERLLRSSDTAPDSVDMLICSASSPIMTDAGDVLPDLRGRLYPRMANVLSKQLGLSRALPLDSQMECASFLLNLRLAASMIRQGKAEKVLVVCSEYISNLLDFTSRTSTLFADGCAVALLTRGDDDSCDLLASAEHSDATFYEVATGRWRLPENPTGEAKPRLYFSLFSDGQNKMASFVPTNVPIAMRRALEKAGLGSDDIDYFVFHQPAPFLVKAWAEGIGARPEQYQLTMGDTGVMISVSIPYTLMTGLREGKIRPGDRIVMAGAATGWGFAAQVWQLGEVLVC.

Residue Cys129 is the Acyl-thioester intermediate of the active site. His269 is an active-site residue.

It belongs to the thiolase-like superfamily. FabH family. In terms of assembly, forms a tight complex with PqsB.

The protein resides in the cytoplasm. The catalysed reaction is (2-aminobenzoyl)acetate + octanoyl-CoA + H(+) = 2-heptyl-4(1H)-quinolone + CO2 + CoA + H2O. With respect to regulation, folding of PqsC and binding of octanoate are promoted by PqsB. Binding of the octanoyl group probably increases the binding affinity of the complex for 2-ABA. Activity of the complex is inhibited by 2-aminoacetophenone (2-AA). Functionally, required for the biosynthesis of the quorum-sensing signaling molecules 2-heptyl-4(1H)-quinolone (HHQ) and 2-heptyl-3-hydroxy-4(1H)-quinolone (Pseudomonas quinolone signal or PQS), which are important for biofilm formation and virulence. The PqsC/PqsB complex catalyzes the condensation of 2-aminobenzoylacetate (2-ABA) and octanoyl-CoA to form HHQ. First, PqsC acquires an octanoyl group from octanoyl-CoA and forms an octanoyl-PqsC intermediate. Then, together with PqsB, it catalyzes the coupling of 2-ABA with the octanoate group, leading to decarboxylation and dehydration, and resulting in closure of the quinoline ring. This is 2-heptyl-4(1H)-quinolone synthase subunit PqsC from Pseudomonas aeruginosa (strain ATCC 15692 / DSM 22644 / CIP 104116 / JCM 14847 / LMG 12228 / 1C / PRS 101 / PAO1).